Consider the following 373-residue polypeptide: 3 beta-hydroxysteroid dehydrogenase/Delta 5--&gt;4-isomerase (373 aa).

The Proton acceptor role is filled by Tyr155. Lys159 lines the NAD(+) pocket. The helical transmembrane segment at Ile288–Ile308 threads the bilayer.

Belongs to the 3-beta-HSD family.

It is found in the endoplasmic reticulum membrane. It localises to the mitochondrion membrane. It catalyses the reaction a 3beta-hydroxy-Delta(5)-steroid + NAD(+) = a 3-oxo-Delta(5)-steroid + NADH + H(+). It carries out the reaction a 3-oxo-Delta(5)-steroid = a 3-oxo-Delta(4)-steroid. It functions in the pathway lipid metabolism; steroid biosynthesis. 3-beta-HSD is a bifunctional enzyme, that catalyzes the oxidative conversion of Delta(5)-ene-3-beta-hydroxy steroid, and the oxidative conversion of ketosteroids. The 3-beta-HSD enzymatic system plays a crucial role in the biosynthesis of all classes of hormonal steroids. The protein is 3 beta-hydroxysteroid dehydrogenase/Delta 5--&gt;4-isomerase (HSD3B) of Canis lupus familiaris (Dog).